A 645-amino-acid polypeptide reads, in one-letter code: Matrix metalloproteinase-24 (645 aa).

Residues 1 to 10 (MPRSRGGRAA) show a composition bias toward low complexity. Positions 1 to 26 (MPRSRGGRAAPGPPPPPPPPGQAPRW) are disordered. The signal sequence occupies residues 1 to 52 (MPRSRGGRAAPGPPPPPPPPGQAPRWSRWRVPGRLLLLLLPALCCLPGAARA). The segment covering 11–22 (PGPPPPPPPPGQ) has biased composition (pro residues). A propeptide spanning residues 53–155 (AAAAAGAGNR…HLSRRRRNKR (103 aa)) is cleaved from the precursor. The Extracellular segment spans residues 53-602 (AAAAAGAGNR…INDVPGSVNA (550 aa)). Residues 137–144 (PRCGVPDH) carry the Cysteine switch motif. Zn(2+)-binding residues include cysteine 139 and histidine 282. Glutamate 283 is an active-site residue. Residues histidine 286 and histidine 292 each coordinate Zn(2+). The tract at residues 323 to 380 (QKIYGPPAEPLEPTRPLPTLPVRRIHSPSERKHERQPRPPRPPLGDRPSTPGTKPNIC) is disordered. Positions 329–341 (PAEPLEPTRPLPT) are enriched in pro residues. The span at 349 to 359 (SPSERKHERQP) shows a compositional bias: basic and acidic residues. 4 Hemopexin repeats span residues 377 to 425 (PNIC…WKGL), 426 to 471 (PARI…GSCL), 473 to 521 (REGI…KGIP), and 522 to 569 (QAPQ…WMGC). Cysteine 380 and cysteine 569 are oxidised to a cystine. A helical membrane pass occupies residues 603–623 (VAVVIPCILSLCILVLVYTIF). Residues 624–645 (QFKNKTGPQPVTYYKRPVQEWV) lie on the Cytoplasmic side of the membrane. Positions 643 to 645 (EWV) match the PDZ-binding motif.

This sequence belongs to the peptidase M10A family. As to quaternary structure, interacts (via PDZ-binding motif) with APBA3 (via PDZ domain). Interacts with GRIP1 and GRIP2. It depends on Zn(2+) as a cofactor. The cofactor is Ca(2+). Cleaved by a furin endopeptidase in the trans-Golgi network. As to expression, predominantly expressed in brain, kidney, pancreas and lung. Overexpressed in a series of brain tumors, including astrocytomas and glioblastomas.

The protein resides in the cell membrane. The protein localises to the golgi apparatus. It is found in the trans-Golgi network membrane. Its subcellular location is the secreted. It localises to the extracellular space. The protein resides in the extracellular matrix. Its function is as follows. Metalloprotease that mediates cleavage of N-cadherin (CDH2) and acts as a regulator of neuro-immune interactions and neural stem cell quiescence. Involved in cell-cell interactions between nociceptive neurites and mast cells, possibly by mediating cleavage of CDH2, thereby acting as a mediator of peripheral thermal nociception and inflammatory hyperalgesia. Key regulator of neural stem cells quiescence by mediating cleavage of CDH2, affecting CDH2-mediated anchorage of neural stem cells to ependymocytes in the adult subependymal zone, leading to modulate their quiescence. May play a role in axonal growth. Able to activate progelatinase A. May also be a proteoglycanase involved in degradation of proteoglycans, such as dermatan sulfate and chondroitin sulfate proteoglycans. Cleaves partially fibronectin, but not collagen type I, nor laminin. The chain is Matrix metalloproteinase-24 (MMP24) from Homo sapiens (Human).